The following is a 242-amino-acid chain: Glutamine transport ATP-binding protein GlnQ (242 aa).

The region spanning 2-236 (ITFQNVNKHY…PKEERARLFL (235 aa)) is the ABC transporter domain. Residue 34-41 (GPSGSGKS) coordinates ATP.

This sequence belongs to the ABC transporter superfamily. In terms of assembly, the complex is composed of two ATP-binding proteins (GlnQ), two transmembrane proteins (GlnM and GlnP) and a solute-binding protein (GlnH).

It is found in the cell membrane. Functionally, part of the ABC transporter complex GlnHMPQ involved in glutamine transport. Probably responsible for energy coupling to the transport system. This is Glutamine transport ATP-binding protein GlnQ (glnQ) from Bacillus subtilis (strain 168).